The chain runs to 215 residues: Programmed cell death protein 10 homolog (215 aa).

Belongs to the PDCD10 family. As to quaternary structure, interacts with gck-1. Expressed in pharynx, intestine, germline, vulva and excretory canals.

The protein resides in the cytoplasm. It is found in the apical cell membrane. Involved in excretory canal elongation during postembryonic development. Plays a role in promoting Golgi stability, ER integrity and vesicle transport probably by regulating the activation of Rho GTPase cdc-42. Involved in fertility. In Caenorhabditis elegans, this protein is Programmed cell death protein 10 homolog.